Here is a 308-residue protein sequence, read N- to C-terminus: tRNA pseudouridine synthase B (308 aa).

The active-site Nucleophile is the Asp49.

It belongs to the pseudouridine synthase TruB family. Type 1 subfamily.

It carries out the reaction uridine(55) in tRNA = pseudouridine(55) in tRNA. Its function is as follows. Responsible for synthesis of pseudouridine from uracil-55 in the psi GC loop of transfer RNAs. This is tRNA pseudouridine synthase B from Nitrosococcus oceani (strain ATCC 19707 / BCRC 17464 / JCM 30415 / NCIMB 11848 / C-107).